An 860-amino-acid polypeptide reads, in one-letter code: GPI ethanolamine phosphate transferase 2 (860 aa).

N-linked (GlcNAc...) asparagine glycosylation is found at N123 and N180. 8 helical membrane passes run 408–428 (LGGI…FSAL), 438–458 (LYLI…TVEE), 459–479 (EHQI…ISGS), 487–506 (FNWM…NQTG), 524–544 (NHPV…NKVW), 555–575 (LAFL…ITQA), 576–596 (WEAG…PGTL), and 639–659 (AFLT…LFMV). A glycan (N-linked (GlcNAc...) asparagine) is linked at N672. The next 4 membrane-spanning stretches (helical) occupy residues 692–712 (LVLV…FSMG), 736–756 (FVGV…STAG), 795–815 (VYVV…TCFF), and 834–854 (FVWT…IFVV).

Belongs to the PIGG/PIGN/PIGO family. PIGG subfamily.

It localises to the endoplasmic reticulum membrane. It participates in glycolipid biosynthesis; glycosylphosphatidylinositol-anchor biosynthesis. In terms of biological role, ethanolamine phosphate transferase involved in glycosylphosphatidylinositol-anchor biosynthesis. Transfers ethanolamine phosphate to the GPI second mannose. The chain is GPI ethanolamine phosphate transferase 2 (LAS21) from Yarrowia lipolytica (strain CLIB 122 / E 150) (Yeast).